We begin with the raw amino-acid sequence, 191 residues long: Peptide methionine sulfoxide reductase MsrA (191 aa).

Cys21 is an active-site residue.

This sequence belongs to the MsrA Met sulfoxide reductase family.

It catalyses the reaction L-methionyl-[protein] + [thioredoxin]-disulfide + H2O = L-methionyl-(S)-S-oxide-[protein] + [thioredoxin]-dithiol. The catalysed reaction is [thioredoxin]-disulfide + L-methionine + H2O = L-methionine (S)-S-oxide + [thioredoxin]-dithiol. Has an important function as a repair enzyme for proteins that have been inactivated by oxidation. Catalyzes the reversible oxidation-reduction of methionine sulfoxide in proteins to methionine. This is Peptide methionine sulfoxide reductase MsrA from Ralstonia nicotianae (strain ATCC BAA-1114 / GMI1000) (Ralstonia solanacearum).